A 332-amino-acid chain; its full sequence is Thiamine-binding periplasmic protein (332 aa).

Residues 1–20 form the signal peptide; sequence MKLLKLTLISTALFSTAALA. Thiamine is bound by residues Trp-202 and 220 to 223; that span reads YSTS.

Belongs to the bacterial solute-binding protein 1 family. The complex is composed of two ATP-binding proteins (ThiQ), two transmembrane proteins (ThiP) and a solute-binding protein (ThiB).

The protein localises to the periplasm. Its function is as follows. Part of the ABC transporter complex ThiBPQ involved in thiamine import. This chain is Thiamine-binding periplasmic protein (thiB), found in Haemophilus influenzae (strain ATCC 51907 / DSM 11121 / KW20 / Rd).